Here is a 153-residue protein sequence, read N- to C-terminus: 3-hydroxyacyl-[acyl-carrier-protein] dehydratase FabZ (153 aa).

Residue His57 is part of the active site.

The protein belongs to the thioester dehydratase family. FabZ subfamily.

The protein resides in the cytoplasm. The catalysed reaction is a (3R)-hydroxyacyl-[ACP] = a (2E)-enoyl-[ACP] + H2O. Its function is as follows. Involved in unsaturated fatty acids biosynthesis. Catalyzes the dehydration of short chain beta-hydroxyacyl-ACPs and long chain saturated and unsaturated beta-hydroxyacyl-ACPs. This is 3-hydroxyacyl-[acyl-carrier-protein] dehydratase FabZ from Aeromonas hydrophila subsp. hydrophila (strain ATCC 7966 / DSM 30187 / BCRC 13018 / CCUG 14551 / JCM 1027 / KCTC 2358 / NCIMB 9240 / NCTC 8049).